A 161-amino-acid polypeptide reads, in one-letter code: UPF0178 protein BSUIS_A1819 (161 aa).

It belongs to the UPF0178 family.

The protein is UPF0178 protein BSUIS_A1819 of Brucella suis (strain ATCC 23445 / NCTC 10510).